Reading from the N-terminus, the 283-residue chain is Protein FAM170A (283 aa).

Disordered regions lie at residues 1–54 and 123–171; these read MKRR…RSQH and GTPP…AKTP. A compositionally biased stretch (polar residues) spans 127 to 138; the sequence is SDVSTRNLLSDS. Over residues 142–153 the composition is skewed to basic and acidic residues; sequence GEEKEHEERTES. The residue at position 170 (Thr-170) is a Phosphothreonine. Residues 181–205 form a C2H2-type; degenerate zinc finger; the sequence is FRCMACCRVFTTMEALQEHVQFGIR. A disordered region spans residues 223–283; that stretch reads NMESESTQDE…VFHSPKDRNS (61 aa). Residues 228–246 show a composition bias toward acidic residues; that stretch reads STQDEQEEENGNEKEEEEK. Ser-268 carries the post-translational modification Phosphoserine.

It belongs to the FAM170 family.

The protein resides in the nucleus. Its function is as follows. Acts as a nuclear transcription factor that positively regulates the expression of heat shock genes. Binds to heat shock promoter elements (HSE). This Macaca fascicularis (Crab-eating macaque) protein is Protein FAM170A (FAM170A).